The primary structure comprises 85 residues: U4-theraphotoxin-Hhn1a (85 aa).

Residues 1 to 22 form the signal peptide; it reads MKVTLIAILTCATVLVLHTTAA. Residues 23 to 48 constitute a propeptide that is removed on maturation; that stretch reads EELEAESQLMEVGMPDTELAAVDEER. 3 cysteine pairs are disulfide-bonded: Cys52-Cys66, Cys56-Cys77, and Cys71-Cys82.

The protein belongs to the neurotoxin 12 (Hwtx-2) family. 02 (Hwtx-2) subfamily. Monomer. Expressed by the venom gland.

It localises to the secreted. Its function is as follows. Neurotoxin active on both insects and mammals. The polypeptide is U4-theraphotoxin-Hhn1a (Cyriopagopus hainanus (Chinese bird spider)).